An 85-amino-acid polypeptide reads, in one-letter code: RNA-binding protein Hfq (85 aa).

One can recognise a Sm domain in the interval 9 to 68 (DPFLNALRRERIPVSIYLVNGIKLQGQIESFDQFVILLKNTVNQMVYKHAISTVVPARPV). The disordered stretch occupies residues 66 to 85 (RPVNHHHASDRPATLEKTEE). Positions 72 to 85 (HASDRPATLEKTEE) are enriched in basic and acidic residues.

It belongs to the Hfq family. In terms of assembly, homohexamer.

In terms of biological role, RNA chaperone that binds small regulatory RNA (sRNAs) and mRNAs to facilitate mRNA translational regulation in response to envelope stress, environmental stress and changes in metabolite concentrations. Also binds with high specificity to tRNAs. The protein is RNA-binding protein Hfq of Photobacterium profundum (strain SS9).